The primary structure comprises 332 residues: MDPRSEVMLRQAELFQGPLLIAGAPADGLLGQLPKAHGWTWHAGDQALLESRFGNRCHHGVGVPEVAFDAAILFLPKSRELAAYLLNALAARLAGRELYLVGEKRGGIEGAAKQLQAFGKPRKLDSARHCQLWQVTVDHAPEAKPLESLAERFELPLEDGPLQVVSLPGVFSHGRLDKGTALLLEHLDGLPSGHVLDFGCGAGVLGATIKRRYPQSQVTLLDVDAFAVAASRLTLAANGLEGQVISGDGIDAAPGELDLILSNPPFHTGVHTDYQASENLLKKSGEHLRKGGEIRLVANSFLRYQPLIEGALGNCEIRAEAQGFRIYRATRG.

Belongs to the methyltransferase superfamily. RsmC family. Monomer.

It is found in the cytoplasm. The enzyme catalyses guanosine(1207) in 16S rRNA + S-adenosyl-L-methionine = N(2)-methylguanosine(1207) in 16S rRNA + S-adenosyl-L-homocysteine + H(+). Specifically methylates the guanine in position 1207 of 16S rRNA in the 30S particle. In Pseudomonas entomophila (strain L48), this protein is Ribosomal RNA small subunit methyltransferase C.